A 97-amino-acid polypeptide reads, in one-letter code: Co-chaperonin GroES (97 aa).

The protein belongs to the GroES chaperonin family. In terms of assembly, heptamer of 7 subunits arranged in a ring. Interacts with the chaperonin GroEL.

Its subcellular location is the cytoplasm. Its function is as follows. Together with the chaperonin GroEL, plays an essential role in assisting protein folding. The GroEL-GroES system forms a nano-cage that allows encapsulation of the non-native substrate proteins and provides a physical environment optimized to promote and accelerate protein folding. GroES binds to the apical surface of the GroEL ring, thereby capping the opening of the GroEL channel. In Aeromonas hydrophila subsp. hydrophila (strain ATCC 7966 / DSM 30187 / BCRC 13018 / CCUG 14551 / JCM 1027 / KCTC 2358 / NCIMB 9240 / NCTC 8049), this protein is Co-chaperonin GroES.